The primary structure comprises 548 residues: Mannosyltransferase APTG1 (548 aa).

The segment at 1-23 (MDIRKRKNAGGDGDGGADGASVN) is disordered. Helical transmembrane passes span 41–61 (IFLFCLAFRVVNALLIQTYFN), 98–118 (LFAFLYKLLQVTGLDTPYIMI), and 146–166 (GNVATWSLFCQMANWFIFFCL). The N-linked (GlcNAc...) asparagine glycan is linked to asparagine 167. 7 helical membrane passes run 169-189 (TFSNCLETVLTIMGLYYWPCI), 204-224 (LVIAALACAIRPTSAVIWLYV), 238-258 (FIILEVIPIGSLVLGFTCLLD), 260-280 (LMYGSWVIVPLNFLKFNFLSS), 294-314 (FTQGFLVMLFTFTPFSIAGII), 320-340 (KLSALILWVLAIYSILGHKEF), and 342-362 (FVLPVLPIALIFSGYAFAQME). The N-linked (GlcNAc...) asparagine glycan is linked to asparagine 382. The helical transmembrane segment at 392–412 (LSVYFLLATNIPMALYMSLFH) threads the bilayer. Asparagine 490 carries an N-linked (GlcNAc...) asparagine glycan.

The protein belongs to the glycosyltransferase 22 family. As to expression, mostly expressed, mainly in vascular tissues, in leaves, roots, stems, flowers, siliques and pollen, and, to a lower extent, in seedlings.

It localises to the endoplasmic reticulum membrane. Mannosyltransferase involved in glycosylphosphatidylinositol-anchor biosynthesis. Required for the pollen tube micropylar guidance and embryo development by regulating GPI-anchor mediated protein localization (e.g. COBL10 and A36). In Arabidopsis thaliana (Mouse-ear cress), this protein is Mannosyltransferase APTG1.